We begin with the raw amino-acid sequence, 920 residues long: Phosphoenolpyruvate carboxylase (920 aa).

Active-site residues include His138 and Lys583.

This sequence belongs to the PEPCase type 1 family. Mg(2+) is required as a cofactor.

The enzyme catalyses oxaloacetate + phosphate = phosphoenolpyruvate + hydrogencarbonate. In terms of biological role, forms oxaloacetate, a four-carbon dicarboxylic acid source for the tricarboxylic acid cycle. The chain is Phosphoenolpyruvate carboxylase from Streptococcus pyogenes serotype M1.